The chain runs to 209 residues: Ribosomal RNA large subunit methyltransferase E (209 aa).

Positions 63, 65, 83, 99, and 124 each coordinate S-adenosyl-L-methionine. The Proton acceptor role is filled by K164.

It belongs to the class I-like SAM-binding methyltransferase superfamily. RNA methyltransferase RlmE family.

Its subcellular location is the cytoplasm. The catalysed reaction is uridine(2552) in 23S rRNA + S-adenosyl-L-methionine = 2'-O-methyluridine(2552) in 23S rRNA + S-adenosyl-L-homocysteine + H(+). Its function is as follows. Specifically methylates the uridine in position 2552 of 23S rRNA at the 2'-O position of the ribose in the fully assembled 50S ribosomal subunit. This chain is Ribosomal RNA large subunit methyltransferase E, found in Photorhabdus laumondii subsp. laumondii (strain DSM 15139 / CIP 105565 / TT01) (Photorhabdus luminescens subsp. laumondii).